The following is a 500-amino-acid chain: L-arabinose isomerase (500 aa).

Mn(2+) is bound by residues Glu306, Glu333, His350, and His450.

This sequence belongs to the arabinose isomerase family. In terms of assembly, homohexamer. It depends on Mn(2+) as a cofactor.

The catalysed reaction is beta-L-arabinopyranose = L-ribulose. Its pathway is carbohydrate degradation; L-arabinose degradation via L-ribulose; D-xylulose 5-phosphate from L-arabinose (bacterial route): step 1/3. Functionally, catalyzes the conversion of L-arabinose to L-ribulose. The sequence is that of L-arabinose isomerase from Salmonella paratyphi A (strain ATCC 9150 / SARB42).